We begin with the raw amino-acid sequence, 357 residues long: Cinnamyl alcohol dehydrogenase 1 (357 aa).

Position 47 (Cys-47) interacts with Zn(2+). Thr-49 provides a ligand contact to NADP(+). Zn(2+) contacts are provided by His-69, Glu-70, Cys-100, Cys-103, Cys-106, Cys-114, and Cys-163. Residues Thr-167, 188-193, 211-216, Thr-251, Gly-275, and 298-300 contribute to the NADP(+) site; these read GLGGVG, SSSDKK, and SFI.

Belongs to the zinc-containing alcohol dehydrogenase family. As to quaternary structure, homodimer. Zn(2+) serves as cofactor. In terms of tissue distribution, expressed in leaves, mainly in peltate glands.

It carries out the reaction (E)-cinnamyl alcohol + NADP(+) = (E)-cinnamaldehyde + NADPH + H(+). The catalysed reaction is (E)-coniferol + NADP(+) = (E)-coniferaldehyde + NADPH + H(+). The enzyme catalyses (E)-sinapyl alcohol + NADP(+) = (E)-sinapaldehyde + NADPH + H(+). It catalyses the reaction (E)-4-coumaroyl alcohol + NADP(+) = (E)-4-coumaraldehyde + NADPH + H(+). It carries out the reaction (E)-caffeyl alcohol + NADP(+) = (E)-caffeyl aldehyde + NADPH + H(+). It functions in the pathway aromatic compound metabolism; phenylpropanoid biosynthesis. 60% inhibition by 5 mM Ca(+), Mg(+) or Cu(+). In terms of biological role, involved in the production of citral, a mixture of geranial and neral with a strong lemony scent. Reversibly oxidizes geraniol to produce geranial at half the efficiency compared with its activity with cinnamyl alcohol. Does not use nerol and neral as substrates. The polypeptide is Cinnamyl alcohol dehydrogenase 1 (CAD1) (Ocimum basilicum (Sweet basil)).